The primary structure comprises 607 residues: UvrABC system protein C (607 aa).

One can recognise a GIY-YIG domain in the interval 15 to 93; sequence SEPGVYCMLD…IKKYQPRYNI (79 aa). Positions 202 to 237 constitute a UVR domain; sequence HEVIADLIKKMEAASQQLNFELAAKVRDQIMLLRKM.

Belongs to the UvrC family. As to quaternary structure, interacts with UvrB in an incision complex.

Its subcellular location is the cytoplasm. Its function is as follows. The UvrABC repair system catalyzes the recognition and processing of DNA lesions. UvrC both incises the 5' and 3' sides of the lesion. The N-terminal half is responsible for the 3' incision and the C-terminal half is responsible for the 5' incision. The chain is UvrABC system protein C from Pseudoalteromonas translucida (strain TAC 125).